The following is a 503-amino-acid chain: Na(+)-translocating NADH-quinone reductase subunit B (503 aa).

5 consecutive transmembrane segments (helical) span residues 55–75 (MMLV…NSGL), 94–114 (ISGF…VPIL), 120–140 (IFIP…VLFA), 161–181 (TLPP…GIVV), and 186–206 (FGGT…FLFF). At T248 the chain carries FMN phosphoryl threonine. Helical transmembrane passes span 361-381 (TSTF…IASW), 386-406 (AFGI…VLIV), 417-437 (FFIP…LVFM), 452-472 (WIYG…NPAY), and 475-495 (GVML…YFAV).

The protein belongs to the NqrB/RnfD family. Composed of six subunits; NqrA, NqrB, NqrC, NqrD, NqrE and NqrF. FMN is required as a cofactor.

Its subcellular location is the cell inner membrane. It catalyses the reaction a ubiquinone + n Na(+)(in) + NADH + H(+) = a ubiquinol + n Na(+)(out) + NAD(+). Its function is as follows. NQR complex catalyzes the reduction of ubiquinone-1 to ubiquinol by two successive reactions, coupled with the transport of Na(+) ions from the cytoplasm to the periplasm. NqrA to NqrE are probably involved in the second step, the conversion of ubisemiquinone to ubiquinol. The protein is Na(+)-translocating NADH-quinone reductase subunit B of Chlamydia pneumoniae (Chlamydophila pneumoniae).